Consider the following 410-residue polypeptide: Ribosomal RNA large subunit methyltransferase G (410 aa).

The protein belongs to the methyltransferase superfamily. RlmG family.

The protein resides in the cytoplasm. It catalyses the reaction guanosine(1835) in 23S rRNA + S-adenosyl-L-methionine = N(2)-methylguanosine(1835) in 23S rRNA + S-adenosyl-L-homocysteine + H(+). Specifically methylates the guanine in position 1835 (m2G1835) of 23S rRNA. The polypeptide is Ribosomal RNA large subunit methyltransferase G (Alteromonas mediterranea (strain DSM 17117 / CIP 110805 / LMG 28347 / Deep ecotype)).